The following is a 498-amino-acid chain: DNA-directed RNA polymerase subunit Rpo2N (498 aa).

The protein belongs to the RNA polymerase beta chain family. In terms of assembly, part of the RNA polymerase complex.

The protein resides in the cytoplasm. It carries out the reaction RNA(n) + a ribonucleoside 5'-triphosphate = RNA(n+1) + diphosphate. Functionally, DNA-dependent RNA polymerase (RNAP) catalyzes the transcription of DNA into RNA using the four ribonucleoside triphosphates as substrates. The Rpo2 subunit (Rpo2N and Rpo2C in this organism) is implicated in DNA promoter recognition and in nucleotide binding. This Methanocaldococcus jannaschii (strain ATCC 43067 / DSM 2661 / JAL-1 / JCM 10045 / NBRC 100440) (Methanococcus jannaschii) protein is DNA-directed RNA polymerase subunit Rpo2N.